The sequence spans 189 residues: Protein GrpE (189 aa).

Residues Met1–Asp10 show a composition bias toward polar residues. Positions Met1–Glu21 are disordered.

Belongs to the GrpE family. As to quaternary structure, homodimer.

Its subcellular location is the cytoplasm. Participates actively in the response to hyperosmotic and heat shock by preventing the aggregation of stress-denatured proteins, in association with DnaK and GrpE. It is the nucleotide exchange factor for DnaK and may function as a thermosensor. Unfolded proteins bind initially to DnaJ; upon interaction with the DnaJ-bound protein, DnaK hydrolyzes its bound ATP, resulting in the formation of a stable complex. GrpE releases ADP from DnaK; ATP binding to DnaK triggers the release of the substrate protein, thus completing the reaction cycle. Several rounds of ATP-dependent interactions between DnaJ, DnaK and GrpE are required for fully efficient folding. The chain is Protein GrpE from Pseudomonas paraeruginosa (strain DSM 24068 / PA7) (Pseudomonas aeruginosa (strain PA7)).